The sequence spans 497 residues: Glycerol kinase (497 aa).

Thr12 lines the ADP pocket. ATP contacts are provided by Thr12, Thr13, and Ser14. Position 12 (Thr12) interacts with sn-glycerol 3-phosphate. Arg16 provides a ligand contact to ADP. The sn-glycerol 3-phosphate site is built by Arg82, Glu83, Tyr134, and Asp243. Glycerol contacts are provided by Arg82, Glu83, Tyr134, Asp243, and Gln244. The ADP site is built by Thr265 and Gly308. Residues Thr265, Gly308, Gln312, and Gly411 each coordinate ATP. Position 411 (Gly411) interacts with ADP.

This sequence belongs to the FGGY kinase family.

The enzyme catalyses glycerol + ATP = sn-glycerol 3-phosphate + ADP + H(+). It functions in the pathway polyol metabolism; glycerol degradation via glycerol kinase pathway; sn-glycerol 3-phosphate from glycerol: step 1/1. With respect to regulation, inhibited by fructose 1,6-bisphosphate (FBP). Its function is as follows. Key enzyme in the regulation of glycerol uptake and metabolism. Catalyzes the phosphorylation of glycerol to yield sn-glycerol 3-phosphate. The chain is Glycerol kinase from Allorhizobium ampelinum (strain ATCC BAA-846 / DSM 112012 / S4) (Agrobacterium vitis (strain S4)).